The following is a 92-amino-acid chain: METPLEKALTTMVTTFHKYSGREGSKLTLSRKELKELIKKELCLGEMKESSIDDLMKSLDKNSDQEIDFKEYSVFLTMLCMAYNDFFLEDNK.

2 EF-hand domains span residues 12–47 (MVTT…LGEM) and 47–82 (MKES…LCMA). Ca(2+) contacts are provided by T28, E33, D60, N62, D64, E66, and E71.

It belongs to the S-100 family. As to quaternary structure, homodimer.

In terms of biological role, binds calcium, zinc and copper. One subunit can simultaneously bind 2 calcium ions or 2 copper ions plus 1 zinc ion. Calcium and copper ions compete for the same binding sites. The chain is Protein S100-A5 (S100A5) from Homo sapiens (Human).